We begin with the raw amino-acid sequence, 244 residues long: Small ribosomal subunit protein eS4 (244 aa).

An S4 RNA-binding domain is found at 43-108; the sequence is LPLLLIVRDI…NYRVLFDRKG (66 aa).

It belongs to the eukaryotic ribosomal protein eS4 family.

This is Small ribosomal subunit protein eS4 (rps4e) from Methanocaldococcus jannaschii (strain ATCC 43067 / DSM 2661 / JAL-1 / JCM 10045 / NBRC 100440) (Methanococcus jannaschii).